A 174-amino-acid chain; its full sequence is Late lactation protein B (174 aa).

Residues 1–18 (MKVLFLTIALSLFSILQA) form the signal peptide. Cys77 and Cys169 are disulfide-bonded.

Belongs to the calycin superfamily. Lipocalin family. In terms of tissue distribution, mammary gland specific. Secreted in milk.

Its subcellular location is the secreted. Functionally, probably serves a role in the transport of a small ligand released during the hydrolysis of milk fat. The sequence is that of Late lactation protein B (LLPB) from Notamacropus eugenii (Tammar wallaby).